We begin with the raw amino-acid sequence, 896 residues long: Translation initiation factor IF-2 (896 aa).

The span at 117-174 (AEAEAKAKAEAEAKAKVDAEAKVKAKAEAEAKAKAKVQTEKPAAETAEDKAAKAEEAK) shows a compositional bias: basic and acidic residues. Positions 117–303 (AEAEAKAKAE…TRSVAPESMD (187 aa)) are disordered. The span at 175–195 (LLAAQDAVAKAKANEEASAAA) shows a compositional bias: low complexity. A compositionally biased stretch (basic and acidic residues) spans 196–227 (DEARRLAEENEKRWAEEEKARKEAEKSVDHHV). Residues 254–268 (PSANAGNNANANAGA) show a composition bias toward low complexity. Positions 396–563 (PRAPVVTIMG…GILLEAEVLE (168 aa)) constitute a tr-type G domain. Residues 405–412 (GHVDHGKT) are G1. Position 405 to 412 (405 to 412 (GHVDHGKT)) interacts with GTP. Positions 430 to 434 (GITQH) are G2. Residues 451-454 (DTPG) form a G3 region. GTP contacts are provided by residues 451 to 455 (DTPGH) and 505 to 508 (NKID). The interval 505 to 508 (NKID) is G4. Positions 541 to 543 (SAK) are G5.

This sequence belongs to the TRAFAC class translation factor GTPase superfamily. Classic translation factor GTPase family. IF-2 subfamily.

It localises to the cytoplasm. In terms of biological role, one of the essential components for the initiation of protein synthesis. Protects formylmethionyl-tRNA from spontaneous hydrolysis and promotes its binding to the 30S ribosomal subunits. Also involved in the hydrolysis of GTP during the formation of the 70S ribosomal complex. The sequence is that of Translation initiation factor IF-2 from Shewanella pealeana (strain ATCC 700345 / ANG-SQ1).